Here is a 330-residue protein sequence, read N- to C-terminus: DNA-directed RNA polymerase subunit alpha (330 aa).

Residues 1–225 form an alpha N-terminal domain (alpha-NTD) region; that stretch reads MSDLAIPTIS…KQFASLVSHS (225 aa). The tract at residues 237 to 330 is alpha C-terminal domain (alpha-CTD); sequence VKYTIPEEKY…KKKNKGIDED (94 aa).

Belongs to the RNA polymerase alpha chain family. In terms of assembly, homodimer. The RNAP catalytic core consists of 2 alpha, 1 beta, 1 beta' and 1 omega subunit. When a sigma factor is associated with the core the holoenzyme is formed, which can initiate transcription.

The enzyme catalyses RNA(n) + a ribonucleoside 5'-triphosphate = RNA(n+1) + diphosphate. Functionally, DNA-dependent RNA polymerase catalyzes the transcription of DNA into RNA using the four ribonucleoside triphosphates as substrates. This Dehalococcoides mccartyi (strain CBDB1) protein is DNA-directed RNA polymerase subunit alpha.